We begin with the raw amino-acid sequence, 253 residues long: Hydroxypyruvate/pyruvate aldolase (253 aa).

Histidine 48 (proton acceptor) is an active-site residue. Residues glutamate 151 and aspartate 177 each coordinate a divalent metal cation.

The protein belongs to the HpcH/HpaI aldolase family. It depends on a divalent metal cation as a cofactor.

The enzyme catalyses D-glyceraldehyde + pyruvate = 2-dehydro-3-deoxy-L-galactonate. Its function is as follows. Aldolase which can catalyze in vitro the aldolisation reaction between hydroxypyruvate (HPA) or pyruvate (PA) and D-glyceraldehyde (D-GA). The condensation of pyruvate and D-glyceraldehyde produces 2-dehydro-3-deoxy-L-galactonate. Has weak activity with hydroxypyruvate and D-glyceraldehyde. In Sagittula stellata (strain ATCC 700073 / DSM 11524 / E-37), this protein is Hydroxypyruvate/pyruvate aldolase.